Reading from the N-terminus, the 474-residue chain is Trehalose-6-phosphate synthase (474 aa).

R10 contacts D-glucose 6-phosphate. 22-23 (GG) contacts UDP-alpha-D-glucose. Y77 and D131 together coordinate D-glucose 6-phosphate. 2 residues coordinate UDP-alpha-D-glucose: R263 and K268. R301 contributes to the D-glucose 6-phosphate binding site. UDP-alpha-D-glucose is bound by residues F340 and 366–370 (LVAKE).

The protein belongs to the glycosyltransferase 20 family. In terms of assembly, homotetramer.

It catalyses the reaction D-glucose 6-phosphate + UDP-alpha-D-glucose = alpha,alpha-trehalose 6-phosphate + UDP + H(+). Its pathway is glycan biosynthesis; trehalose biosynthesis. Functionally, probably involved in the osmoprotection via the biosynthesis of trehalose. Catalyzes the transfer of glucose from UDP-alpha-D-glucose (UDP-Glc) to D-glucose 6-phosphate (Glc-6-P) to form trehalose-6-phosphate. Acts with retention of the anomeric configuration of the UDP-sugar donor. The polypeptide is Trehalose-6-phosphate synthase (Escherichia coli O6:K15:H31 (strain 536 / UPEC)).